The sequence spans 490 residues: MTVAAPAKVQYEAVIGLEVHCQLSTRSKIFSSSATAFGAPPNTQIDPICMGLPGTLPVLNEKVLEYAVKAGLALNCTIAPYSKFDRKQYFYPDLPKNYQISQYDLPIATHGWIEIQLSDGRTKRIGITRLHMEEDAGKLVHAGSDRLSGSSYSLVDFNRAGVPLIEIVSEPDIRSGEEAAEYVQELRRILRYAGLCDGNLQEGSLRCDVNISVRPLGSQTFGTKVEIKNMNSFNAIQRAIEYEFNRQVKAVEAGERIVQETRLWEENSQRTISMRKKEGSSDYRYFPEPDLPPIRVTEAQKTRWQAELPELPGVKRRRYQEVYGLSVYDARYLSDERNTAEYFEAVIAAGADPKAAANWMMSDIASYLNTHKLDYPDIALKPETLAELIGLIEQGTISSKIAKEILPELLEKGGSARALVEAKGMTQISDSALLGQMIAEVLAENPEQLQQYRGGKTKLFGYFVGQLMKKTQGRADPKLANDLLKQHLDG.

It belongs to the GatB/GatE family. GatB subfamily. As to quaternary structure, heterotrimer of A, B and C subunits.

The enzyme catalyses L-glutamyl-tRNA(Gln) + L-glutamine + ATP + H2O = L-glutaminyl-tRNA(Gln) + L-glutamate + ADP + phosphate + H(+). It catalyses the reaction L-aspartyl-tRNA(Asn) + L-glutamine + ATP + H2O = L-asparaginyl-tRNA(Asn) + L-glutamate + ADP + phosphate + 2 H(+). Its function is as follows. Allows the formation of correctly charged Asn-tRNA(Asn) or Gln-tRNA(Gln) through the transamidation of misacylated Asp-tRNA(Asn) or Glu-tRNA(Gln) in organisms which lack either or both of asparaginyl-tRNA or glutaminyl-tRNA synthetases. The reaction takes place in the presence of glutamine and ATP through an activated phospho-Asp-tRNA(Asn) or phospho-Glu-tRNA(Gln). The sequence is that of Aspartyl/glutamyl-tRNA(Asn/Gln) amidotransferase subunit B from Synechococcus sp. (strain JA-2-3B'a(2-13)) (Cyanobacteria bacterium Yellowstone B-Prime).